The sequence spans 359 residues: Alanine racemase, biosynthetic (359 aa).

Lysine 34 (proton acceptor; specific for D-alanine) is an active-site residue. Lysine 34 carries the N6-(pyridoxal phosphate)lysine modification. Arginine 129 is a substrate binding site. The Proton acceptor; specific for L-alanine role is filled by tyrosine 255. Methionine 303 lines the substrate pocket.

This sequence belongs to the alanine racemase family. Pyridoxal 5'-phosphate is required as a cofactor.

The enzyme catalyses L-alanine = D-alanine. It functions in the pathway amino-acid biosynthesis; D-alanine biosynthesis; D-alanine from L-alanine: step 1/1. It participates in cell wall biogenesis; peptidoglycan biosynthesis. Functionally, catalyzes the interconversion of L-alanine and D-alanine. Provides the D-alanine required for cell wall biosynthesis. This chain is Alanine racemase, biosynthetic (alr), found in Salmonella typhi.